We begin with the raw amino-acid sequence, 123 residues long: Probable ketoamine kinase in tonB 3'region (123 aa).

Catalysis depends on aspartate 26, which acts as the Proton acceptor.

It belongs to the fructosamine kinase family.

Functionally, ketoamine kinase that phosphorylates ketoamines on the third carbon of the sugar moiety to generate ketoamine 3-phosphate. The protein is Probable ketoamine kinase in tonB 3'region of Klebsiella pneumoniae.